A 91-amino-acid polypeptide reads, in one-letter code: DNA-directed RNA polymerase subunit omega (91 aa).

Belongs to the RNA polymerase subunit omega family. As to quaternary structure, the RNAP catalytic core consists of 2 alpha, 1 beta, 1 beta' and 1 omega subunit. When a sigma factor is associated with the core the holoenzyme is formed, which can initiate transcription.

The catalysed reaction is RNA(n) + a ribonucleoside 5'-triphosphate = RNA(n+1) + diphosphate. Functionally, promotes RNA polymerase assembly. Latches the N- and C-terminal regions of the beta' subunit thereby facilitating its interaction with the beta and alpha subunits. In Serratia proteamaculans (strain 568), this protein is DNA-directed RNA polymerase subunit omega.